A 186-amino-acid polypeptide reads, in one-letter code: Elongation factor P (186 aa).

The protein belongs to the elongation factor P family.

It is found in the cytoplasm. It participates in protein biosynthesis; polypeptide chain elongation. Functionally, involved in peptide bond synthesis. Stimulates efficient translation and peptide-bond synthesis on native or reconstituted 70S ribosomes in vitro. Probably functions indirectly by altering the affinity of the ribosome for aminoacyl-tRNA, thus increasing their reactivity as acceptors for peptidyl transferase. This is Elongation factor P from Shewanella halifaxensis (strain HAW-EB4).